The following is a 320-amino-acid chain: Polyketide transferase FFUJ_12241 (320 aa).

The abhydrolase domain stretch occupies residues 58-298 (RDITCLAWDP…ILKGKGHLDW (241 aa)).

Belongs to the polyketide transferase af380 family.

In terms of biological role, polyketide transferase; part of the gene cluster that mediates the biosynthesis of fujikurins A-D, secondary metabolites playing a role during rice infection. The polyketide synthase PKS19 acts with the trans-enoyl reductase FFUJ_12240 and the polyketide transferase FFUJ_12241 to produce fujikurins, however, the biosynthesis pathway has not been identified yet. In Gibberella fujikuroi (strain CBS 195.34 / IMI 58289 / NRRL A-6831) (Bakanae and foot rot disease fungus), this protein is Polyketide transferase FFUJ_12241.